The primary structure comprises 219 residues: Lipid transferase CIDEA (219 aa).

In terms of domain architecture, CIDE-N spans 33–110 (PARPFRVSNH…ILEKGQKWMP (78 aa)). The amphipathic helix stretch occupies residues 163–180 (CTGLKGLLRSLLRFLSYS).

It belongs to the CIDE family. Homodimer. Interacts with CIDEC. Directly interacts with CEBPB. Interacts with isoform CLSTN3beta of CLSTN3; inhibiting the lipid transferase activity of CIDEA. In terms of tissue distribution, expressed in omental and subcutaneous adipose tissue (at protein level).

Its subcellular location is the lipid droplet. It is found in the nucleus. The catalysed reaction is a triacyl-sn-glycerol(in) = a triacyl-sn-glycerol(out). Its function is as follows. Lipid transferase that promotes unilocular lipid droplet formation by mediating lipid droplet fusion. Lipid droplet fusion promotes their enlargement, restricting lipolysis and favoring lipid storage. Localizes on the lipid droplet surface, at focal contact sites between lipid droplets, and mediates atypical lipid droplet fusion by promoting directional net neutral lipid transfer from the smaller to larger lipid droplets. The transfer direction may be driven by the internal pressure difference between the contacting lipid droplet pair and occurs at a lower rate than that promoted by CIDEC. May also act as a CEBPB coactivator in epithelial cells to control the expression of a subset of CEBPB downstream target genes, including ID2, IGF1, PRLR, SOCS1, SOCS3, XDH, but not casein. By interacting with CEBPB, strengthens the association of CEBPB with the XDH promoter, increases histone acetylation and dissociates HDAC1 from the promoter. When overexpressed, induces apoptosis; the physiological significance of its role in apoptosis is unclear. The protein is Lipid transferase CIDEA of Homo sapiens (Human).